Reading from the N-terminus, the 152-residue chain is Outer membrane protein assembly factor BamE (152 aa).

An N-terminal signal peptide occupies residues 1–32; it reads MIDQNHDSEEQAQMQKLTRTVTLTVALTLVSG. A lipid anchor (N-palmitoyl cysteine) is attached at cysteine 33. The S-diacylglycerol cysteine moiety is linked to residue cysteine 33. A disordered region spans residues 114–152; that stretch reads IDRHGDFSRPPSVADERGIGPTDSTNARGNLLNARPDDE.

It belongs to the BamE family. In terms of assembly, part of the Bam complex.

Its subcellular location is the cell outer membrane. Functionally, part of the outer membrane protein assembly complex, which is involved in assembly and insertion of beta-barrel proteins into the outer membrane. The protein is Outer membrane protein assembly factor BamE of Halomonas elongata (strain ATCC 33173 / DSM 2581 / NBRC 15536 / NCIMB 2198 / 1H9).